A 492-amino-acid polypeptide reads, in one-letter code: uncharacterized protein (492 aa).

The protein belongs to the FGGY kinase family.

This is an uncharacterized protein from Archaeoglobus fulgidus (strain ATCC 49558 / DSM 4304 / JCM 9628 / NBRC 100126 / VC-16).